The chain runs to 361 residues: Oxidoreductase lepF (361 aa).

Residues Met-257–Leu-277 traverse the membrane as a helical segment.

Belongs to the NmrA-type oxidoreductase family.

Its subcellular location is the membrane. In terms of biological role, oxidoreductase; part of the gene cluster 23 that mediates the biosynthesis of a family of 2-pyridones known as leporins. The hybrid PKS-NRPS synthetase lepA and the enoyl reductase lepG are responsible for fusion of phenylalanine with a hexaketide and subsequent release of the stable tetramic acid precursor, pre-leporin C. Because lepA lacks a designated enoylreductase (ER) domain, the required activity is provided the enoyl reductase lepG. It is possible that the dehydrogenase lepF also participates in production of pre-leporin C. Cytochrome P450 monooxygenase lepH is then required for the ring expansion step to yield leporin C. Leporin C is then presumably further oxidized by the N-hydroxylase lepD to form leporin B. LepI may possess a function in biosynthesis upstream of lepA. Leporin B is further oxidized in the presence of ferric ion to give the leporin B trimer-iron chelate, but whether or not this reaction is catalyzed by an enzyme in the pathway or by ferric ion is not determined yet. This Aspergillus flavus (strain ATCC 200026 / FGSC A1120 / IAM 13836 / NRRL 3357 / JCM 12722 / SRRC 167) protein is Oxidoreductase lepF.